Consider the following 423-residue polypeptide: Glutaminase (423 aa).

A glutaminase region spans residues 27 to 312; sequence GEVAQYIPQL…LSEDMGLHLM (286 aa). 7 residues coordinate substrate: S69, N119, E165, N172, Y196, Y248, and V266. In terms of domain architecture, STAS spans 321-423; sequence AVRAIEERGD…SPQVDDPEEL (103 aa).

It belongs to the glutaminase family. As to quaternary structure, homotetramer.

It carries out the reaction L-glutamine + H2O = L-glutamate + NH4(+). This chain is Glutaminase (glsA), found in Corynebacterium efficiens (strain DSM 44549 / YS-314 / AJ 12310 / JCM 11189 / NBRC 100395).